The sequence spans 283 residues: Formamidopyrimidine-DNA glycosylase (283 aa).

P2 acts as the Schiff-base intermediate with DNA in catalysis. The active-site Proton donor is the E3. Residue K58 is the Proton donor; for beta-elimination activity of the active site. DNA-binding residues include H100, R119, and R162. The FPG-type zinc finger occupies 247-283; that stretch reads RVYGREGQPCVTPGCRGLVGRIVQSGRSSFHCPECQR. The active-site Proton donor; for delta-elimination activity is R273.

The protein belongs to the FPG family. As to quaternary structure, monomer. It depends on Zn(2+) as a cofactor.

It catalyses the reaction Hydrolysis of DNA containing ring-opened 7-methylguanine residues, releasing 2,6-diamino-4-hydroxy-5-(N-methyl)formamidopyrimidine.. The catalysed reaction is 2'-deoxyribonucleotide-(2'-deoxyribose 5'-phosphate)-2'-deoxyribonucleotide-DNA = a 3'-end 2'-deoxyribonucleotide-(2,3-dehydro-2,3-deoxyribose 5'-phosphate)-DNA + a 5'-end 5'-phospho-2'-deoxyribonucleoside-DNA + H(+). Functionally, involved in base excision repair of DNA damaged by oxidation or by mutagenic agents. Acts as a DNA glycosylase that recognizes and removes damaged bases. Has a preference for oxidized purines, such as 7,8-dihydro-8-oxoguanine (8-oxoG). Has AP (apurinic/apyrimidinic) lyase activity and introduces nicks in the DNA strand. Cleaves the DNA backbone by beta-delta elimination to generate a single-strand break at the site of the removed base with both 3'- and 5'-phosphates. In Cereibacter sphaeroides (strain ATCC 17025 / ATH 2.4.3) (Rhodobacter sphaeroides), this protein is Formamidopyrimidine-DNA glycosylase.